A 155-amino-acid chain; its full sequence is MAPK regulated corepressor interacting protein 2 (155 aa).

Position 1 is an N-acetylmethionine (methionine 1). Residues 1–59 (MYTITKGPSKLVAQRRTGPTQQQVESRLGELLKCRHSAPTPQHPRAQPPGPWPLSSPGP) form a disordered region. Arginine 35 carries the omega-N-methylarginine modification. Residues 46–56 (AQPPGPWPLSS) show a composition bias toward pro residues. Serine 56 bears the Phosphoserine mark. Arginine 60 carries the post-translational modification Omega-N-methylarginine. Serine 77 carries the phosphoserine modification.

This sequence belongs to the MCRIP family. Interacts with DDX6. Interacts with MCRIP1.

The protein resides in the cytoplasm. Its subcellular location is the stress granule. It is found in the nucleus. The sequence is that of MAPK regulated corepressor interacting protein 2 (MCRIP2) from Bos taurus (Bovine).